A 37-amino-acid chain; its full sequence is Photosystem II reaction center protein T (37 aa).

A helical membrane pass occupies residues A3–F23.

This sequence belongs to the PsbT family. PSII is composed of 1 copy each of membrane proteins PsbA, PsbB, PsbC, PsbD, PsbE, PsbF, PsbH, PsbI, PsbJ, PsbK, PsbL, PsbM, PsbT, PsbY, PsbZ, Psb30/Ycf12, at least 3 peripheral proteins of the oxygen-evolving complex and a large number of cofactors. It forms dimeric complexes.

It localises to the plastid. Its subcellular location is the chloroplast thylakoid membrane. In terms of biological role, found at the monomer-monomer interface of the photosystem II (PS II) dimer, plays a role in assembly and dimerization of PSII. PSII is a light-driven water plastoquinone oxidoreductase, using light energy to abstract electrons from H(2)O, generating a proton gradient subsequently used for ATP formation. This is Photosystem II reaction center protein T from Spirogyra maxima (Green alga).